Reading from the N-terminus, the 302-residue chain is Oxygen-dependent coproporphyrinogen-III oxidase (302 aa).

Residue serine 90 coordinates substrate. Histidine 94 and histidine 104 together coordinate a divalent metal cation. The active-site Proton donor is histidine 104. 106 to 108 (NVR) is a binding site for substrate. Residues histidine 143 and histidine 173 each contribute to the a divalent metal cation site. Residues 238-273 (YVEFNLIYDRGTIFGLQSNGRTESILLSMPPIVKWR) form an important for dimerization region.

This sequence belongs to the aerobic coproporphyrinogen-III oxidase family. In terms of assembly, homodimer. Requires a divalent metal cation as cofactor.

The protein resides in the cytoplasm. It catalyses the reaction coproporphyrinogen III + O2 + 2 H(+) = protoporphyrinogen IX + 2 CO2 + 2 H2O. It participates in porphyrin-containing compound metabolism; protoporphyrin-IX biosynthesis; protoporphyrinogen-IX from coproporphyrinogen-III (O2 route): step 1/1. Its function is as follows. Involved in the heme biosynthesis. Catalyzes the aerobic oxidative decarboxylation of propionate groups of rings A and B of coproporphyrinogen-III to yield the vinyl groups in protoporphyrinogen-IX. The sequence is that of Oxygen-dependent coproporphyrinogen-III oxidase from Methylobacillus flagellatus (strain ATCC 51484 / DSM 6875 / VKM B-1610 / KT).